Here is a 516-residue protein sequence, read N- to C-terminus: Flavonoid-6-hydroxylase (516 aa).

A helical membrane pass occupies residues phenylalanine 3–tryptophan 23. Cysteine 455 is a heme binding site.

This sequence belongs to the cytochrome P450 family. Heme serves as cofactor.

It is found in the membrane. The enzyme catalyses genkwanin + reduced [NADPH--hemoprotein reductase] + O2 = scutellarein 7-methyl ether + oxidized [NADPH--hemoprotein reductase] + H2O. It catalyses the reaction (2S)-sakuranetin + reduced [NADPH--hemoprotein reductase] + O2 = (2S)-7-methylcarthamidin + oxidized [NADPH--hemoprotein reductase] + H2O + H(+). It carries out the reaction apigenin 4',7-dimethyl ether + reduced [NADPH--hemoprotein reductase] + O2 = ladanein + oxidized [NADPH--hemoprotein reductase] + H2O + H(+). The catalysed reaction is (2S)-naringenin 4',7-dimethyl ether + reduced [NADPH--hemoprotein reductase] + O2 = (2S)-carthamidin-4',7-dimethyl ether + oxidized [NADPH--hemoprotein reductase] + H2O + H(+). It participates in flavonoid metabolism. 6-OH hydroxylase involved in the biosynthesis of polymethoxylated flavonoids natural products such as pebrellin, aroma compounds which contribute to the flavor of peppermint, and exhibit pharmacological activities such as anti-allergic, anti-oxidant, antibacterial, anti-proliferative, and anti-inflammatory effects. Catalyzes the 6-hydroxylation of 7-O-methylated precursors such as the conversion of genkwanin (GENK) to scutellarein-7-methyl ether (SCU7Me). Can also use apigenin-7,4'-dimethyl ether (AdM), naringenin-7-methyl ether (SAK) and naringenin-7,4'-dimethyl ether (NdM) as substrates. The protein is Flavonoid-6-hydroxylase of Mentha piperita (Peppermint).